The sequence spans 543 residues: Putative pectinesterase/pectinesterase inhibitor 22 (543 aa).

An N-terminal signal peptide occupies residues 1–19 (MGITTALLLVMLMSVHTSS). The pectinesterase inhibitor 22 stretch occupies residues 38–197 (AKACQFIDAH…TQLVSNVLDM (160 aa)). N-linked (GlcNAc...) asparagine glycans are attached at residues Asn-211 and Asn-263. Residues 240–527 (NTVVAIDGKG…FTVGSFIDGR (288 aa)) form a pectinesterase 22 region. Thr-315 and Gln-345 together coordinate substrate. Asp-368 serves as the catalytic Proton donor; for pectinesterase activity. Cys-382 and Cys-402 form a disulfide bridge. The active-site Nucleophile; for pectinesterase activity is the Asp-389. Arg-448 and Trp-450 together coordinate substrate.

The protein in the N-terminal section; belongs to the PMEI family. This sequence in the C-terminal section; belongs to the pectinesterase family.

Its subcellular location is the secreted. The protein localises to the cell wall. The enzyme catalyses [(1-&gt;4)-alpha-D-galacturonosyl methyl ester](n) + n H2O = [(1-&gt;4)-alpha-D-galacturonosyl](n) + n methanol + n H(+). Its pathway is glycan metabolism; pectin degradation; 2-dehydro-3-deoxy-D-gluconate from pectin: step 1/5. Functionally, acts in the modification of cell walls via demethylesterification of cell wall pectin. In Arabidopsis thaliana (Mouse-ear cress), this protein is Putative pectinesterase/pectinesterase inhibitor 22 (PME22).